The chain runs to 78 residues: Acyl carrier protein (78 aa).

Positions S2–M77 constitute a Carrier domain. Position 37 is an O-(pantetheine 4'-phosphoryl)serine (S37).

This sequence belongs to the acyl carrier protein (ACP) family. In terms of processing, 4'-phosphopantetheine is transferred from CoA to a specific serine of apo-ACP by AcpS. This modification is essential for activity because fatty acids are bound in thioester linkage to the sulfhydryl of the prosthetic group.

Its subcellular location is the cytoplasm. It functions in the pathway lipid metabolism; fatty acid biosynthesis. Functionally, carrier of the growing fatty acid chain in fatty acid biosynthesis. In Magnetococcus marinus (strain ATCC BAA-1437 / JCM 17883 / MC-1), this protein is Acyl carrier protein.